Reading from the N-terminus, the 382-residue chain is 1-deoxy-D-xylulose 5-phosphate reductoisomerase (382 aa).

Thr10, Gly11, Ser12, Ile13, Gly36, and Asn122 together coordinate NADPH. Lys123 is a 1-deoxy-D-xylulose 5-phosphate binding site. Residue Glu124 coordinates NADPH. Asp148 is a binding site for Mn(2+). 1-deoxy-D-xylulose 5-phosphate is bound by residues Ser149, Glu150, Ser174, and His197. Glu150 provides a ligand contact to Mn(2+). Gly203 lines the NADPH pocket. 4 residues coordinate 1-deoxy-D-xylulose 5-phosphate: Ser210, Asn215, Lys216, and Glu219. Glu219 lines the Mn(2+) pocket.

Belongs to the DXR family. The cofactor is Mg(2+). Mn(2+) serves as cofactor.

The catalysed reaction is 2-C-methyl-D-erythritol 4-phosphate + NADP(+) = 1-deoxy-D-xylulose 5-phosphate + NADPH + H(+). It functions in the pathway isoprenoid biosynthesis; isopentenyl diphosphate biosynthesis via DXP pathway; isopentenyl diphosphate from 1-deoxy-D-xylulose 5-phosphate: step 1/6. Catalyzes the NADPH-dependent rearrangement and reduction of 1-deoxy-D-xylulose-5-phosphate (DXP) to 2-C-methyl-D-erythritol 4-phosphate (MEP). The polypeptide is 1-deoxy-D-xylulose 5-phosphate reductoisomerase (Chlorobium chlorochromatii (strain CaD3)).